Here is a 394-residue protein sequence, read N- to C-terminus: UPF0229 protein RBAM_009260 (394 aa).

Belongs to the UPF0229 family.

The polypeptide is UPF0229 protein RBAM_009260 (Bacillus velezensis (strain DSM 23117 / BGSC 10A6 / LMG 26770 / FZB42) (Bacillus amyloliquefaciens subsp. plantarum)).